A 90-amino-acid polypeptide reads, in one-letter code: Leech factor Xa inhibitor (90 aa).

The protein resides in the secreted. In terms of biological role, potent anticoagulant inhibiting the amidolytic activity of factor Xa (F10) (Ki=4nM) and reducing its ability to activate prothrombin (F2) in the prothrombinase complex (EC(50)=40nM). The sequence is that of Leech factor Xa inhibitor from Haementeria depressa (Leech).